We begin with the raw amino-acid sequence, 383 residues long: Succinyl-diaminopimelate desuccinylase (383 aa).

Zn(2+) is bound at residue H73. Residue D75 is part of the active site. D107 serves as a coordination point for Zn(2+). The Proton acceptor role is filled by E141. Zn(2+) contacts are provided by E142, E170, and H356.

It belongs to the peptidase M20A family. DapE subfamily. In terms of assembly, homodimer. Requires Zn(2+) as cofactor. Co(2+) serves as cofactor.

It carries out the reaction N-succinyl-(2S,6S)-2,6-diaminopimelate + H2O = (2S,6S)-2,6-diaminopimelate + succinate. It functions in the pathway amino-acid biosynthesis; L-lysine biosynthesis via DAP pathway; LL-2,6-diaminopimelate from (S)-tetrahydrodipicolinate (succinylase route): step 3/3. Catalyzes the hydrolysis of N-succinyl-L,L-diaminopimelic acid (SDAP), forming succinate and LL-2,6-diaminopimelate (DAP), an intermediate involved in the bacterial biosynthesis of lysine and meso-diaminopimelic acid, an essential component of bacterial cell walls. The chain is Succinyl-diaminopimelate desuccinylase from Pseudomonas fluorescens (strain ATCC BAA-477 / NRRL B-23932 / Pf-5).